A 230-amino-acid polypeptide reads, in one-letter code: MPVPSVTVTTDNEYEDISSFSSIDSYKPEPFTGFKDSEAPEQPLLKNDTIVGKGQLEDDSNVDDQHRHSDVHSHHSSSTLKRPTSNSIEKMVTHNALEGNSETVDSLKEDGLNLNKKALPDITAPVTNSAHDAAFPEEYRLETETGLVKLKTLESLKREDSRVSSTKKEHINDHTDMHSTRSKVTTNSQGSSLEPNKLNMAVEKNKKRIEKYQKHKSEKGIKGFFHRIFD.

Residues 1–11 (MPVPSVTVTTD) are compositionally biased toward polar residues. The interval 1-88 (MPVPSVTVTT…TLKRPTSNSI (88 aa)) is disordered. Residues 63–73 (DDQHRHSDVHS) are compositionally biased toward basic and acidic residues. The segment covering 79 to 88 (TLKRPTSNSI) has biased composition (polar residues). Ser-106 is modified (phosphoserine). The span at 156 to 179 (LKREDSRVSSTKKEHINDHTDMHS) shows a compositional bias: basic and acidic residues. Positions 156-203 (LKREDSRVSSTKKEHINDHTDMHSTRSKVTTNSQGSSLEPNKLNMAVE) are disordered. A compositionally biased stretch (polar residues) spans 182-194 (SKVTTNSQGSSLE).

This is an uncharacterized protein from Saccharomyces cerevisiae (strain ATCC 204508 / S288c) (Baker's yeast).